Here is a 261-residue protein sequence, read N- to C-terminus: Hemin import ATP-binding protein HmuV (261 aa).

The ABC transporter domain maps to 5-241; that stretch reads YTAENLTFTR…DALAHWYGAQ (237 aa). Residue 37–44 coordinates ATP; the sequence is GPNGAGKS.

Belongs to the ABC transporter superfamily. Heme (hemin) importer (TC 3.A.1.14.5) family. As to quaternary structure, the complex is composed of two ATP-binding proteins (HmuV), two transmembrane proteins (HmuU) and a solute-binding protein (HmuT).

Its subcellular location is the cell inner membrane. Its function is as follows. Part of the ABC transporter complex HmuTUV involved in hemin import. Responsible for energy coupling to the transport system. The polypeptide is Hemin import ATP-binding protein HmuV (Enterobacter cloacae).